Reading from the N-terminus, the 230-residue chain is Sugar fermentation stimulation protein homolog (230 aa).

It belongs to the SfsA family.

The sequence is that of Sugar fermentation stimulation protein homolog from Clostridium botulinum (strain Okra / Type B1).